The chain runs to 81 residues: ATP synthase subunit c, chloroplastic (81 aa).

Transmembrane regions (helical) follow at residues 7–27 (AASVIAAGLAVGLASIGPGIG) and 57–77 (LAFMEALTIYGLVVALALLFA).

This sequence belongs to the ATPase C chain family. As to quaternary structure, F-type ATPases have 2 components, F(1) - the catalytic core - and F(0) - the membrane proton channel. F(1) has five subunits: alpha(3), beta(3), gamma(1), delta(1), epsilon(1). F(0) has four main subunits: a(1), b(1), b'(1) and c(10-14). The alpha and beta chains form an alternating ring which encloses part of the gamma chain. F(1) is attached to F(0) by a central stalk formed by the gamma and epsilon chains, while a peripheral stalk is formed by the delta, b and b' chains.

It localises to the plastid. It is found in the chloroplast thylakoid membrane. Its function is as follows. F(1)F(0) ATP synthase produces ATP from ADP in the presence of a proton or sodium gradient. F-type ATPases consist of two structural domains, F(1) containing the extramembraneous catalytic core and F(0) containing the membrane proton channel, linked together by a central stalk and a peripheral stalk. During catalysis, ATP synthesis in the catalytic domain of F(1) is coupled via a rotary mechanism of the central stalk subunits to proton translocation. Functionally, key component of the F(0) channel; it plays a direct role in translocation across the membrane. A homomeric c-ring of between 10-14 subunits forms the central stalk rotor element with the F(1) delta and epsilon subunits. The sequence is that of ATP synthase subunit c, chloroplastic from Staurastrum punctulatum (Green alga).